The following is a 458-amino-acid chain: UDP-N-acetylmuramoylalanine--D-glutamate ligase (458 aa).

124–130 (GSDGKTT) provides a ligand contact to ATP.

The protein belongs to the MurCDEF family.

Its subcellular location is the cytoplasm. The catalysed reaction is UDP-N-acetyl-alpha-D-muramoyl-L-alanine + D-glutamate + ATP = UDP-N-acetyl-alpha-D-muramoyl-L-alanyl-D-glutamate + ADP + phosphate + H(+). It participates in cell wall biogenesis; peptidoglycan biosynthesis. In terms of biological role, cell wall formation. Catalyzes the addition of glutamate to the nucleotide precursor UDP-N-acetylmuramoyl-L-alanine (UMA). The polypeptide is UDP-N-acetylmuramoylalanine--D-glutamate ligase (Clostridium perfringens (strain 13 / Type A)).